A 613-amino-acid chain; its full sequence is Chitin synthase 8 (613 aa).

A disordered region spans residues 1–73 (MAVSPTAKRK…PAPLTRPPPP (73 aa)). N-linked (GlcNAc...) asparagine glycosylation occurs at asparagine 17. A compositionally biased stretch (polar residues) spans 18-27 (LSRQSSSART). A compositionally biased stretch (pro residues) spans 61 to 73 (ESPPAPLTRPPPP). The next 2 helical transmembrane spans lie at 119-139 (YSLI…LWNY) and 142-162 (YWYI…IFAI). 3 N-linked (GlcNAc...) asparagine glycosylation sites follow: asparagine 312, asparagine 421, and asparagine 471. The next 2 membrane-spanning stretches (helical) occupy residues 556-576 (VTTW…AIAL) and 583-602 (IFEN…RYAA).

Belongs to the chitin synthase family.

It is found in the cell membrane. It catalyses the reaction [(1-&gt;4)-N-acetyl-beta-D-glucosaminyl](n) + UDP-N-acetyl-alpha-D-glucosamine = [(1-&gt;4)-N-acetyl-beta-D-glucosaminyl](n+1) + UDP + H(+). In terms of biological role, polymerizes chitin, a structural polymer of the cell wall and septum, by transferring the sugar moiety of UDP-GlcNAc to the non-reducing end of the growing chitin polymer. Plays a role in cell wall integrity. Plays a key role in pathogenicity. Likely contributes to post-penetration virulence. This is Chitin synthase 8 from Verticillium dahliae (strain VdLs.17 / ATCC MYA-4575 / FGSC 10137) (Verticillium wilt).